Reading from the N-terminus, the 234-residue chain is MSTEIGHLRRRLVEFLIQSTTLLELPPIVKYSALSLFFDRFRPNLVRFLQKKKAEHWLLQPLNESNLQLFVLISIWISCKMHCTRGLSVHSLKSFGDKVITEQLFMVRDFLDAELVFLKVLKFEIGTLNIAYTRLEDLLIQFKEVAKVGEQLNFEACMDMMDLLYEKEDTSLLYQSSKSLAASILVSSYIITVPKQQYEFPILPWVKMVTNKEEREVVELVEYILAHVLYSNSP.

It belongs to the cyclin family.

This Arabidopsis thaliana (Mouse-ear cress) protein is Cyclin-J18 (CYCJ18).